The following is a 95-amino-acid chain: MDRKEIFERIEQVLAEQLGIPAEQITEEADLREDLGMDSLDLVELVSALEDEVGMRVEQSQLEGIETVGHVMELTLDLVARLATASAADKPEAAS.

In terms of domain architecture, Carrier spans 4 to 79 (KEIFERIEQV…HVMELTLDLV (76 aa)). The residue at position 39 (S39) is an O-(pantetheine 4'-phosphoryl)serine.

It belongs to the acyl carrier protein (ACP) family. Post-translationally, 4'-phosphopantetheine is transferred from CoA to a specific serine of apo-ACP by AcpS. This modification is essential for activity because fatty acids are bound in thioester linkage to the sulfhydryl of the prosthetic group.

It is found in the cytoplasm. Its pathway is lipid metabolism; fatty acid biosynthesis. In terms of biological role, carrier of the growing fatty acid chain in fatty acid biosynthesis. This chain is Acyl carrier protein, found in Saccharopolyspora erythraea (strain ATCC 11635 / DSM 40517 / JCM 4748 / NBRC 13426 / NCIMB 8594 / NRRL 2338).